A 633-amino-acid polypeptide reads, in one-letter code: Phosphomethylpyrimidine synthase (633 aa).

Residues 1 to 13 show a composition bias toward polar residues; it reads MNIRSNPDTTLPA. The disordered stretch occupies residues 1 to 22; it reads MNIRSNPDTTLPAVTTGPLPSS. Substrate-binding positions include Asn221, Met250, Tyr279, His315, 335–337, 376–379, and Glu415; these read SRG and DGLR. Residue His419 participates in Zn(2+) binding. Position 442 (Tyr442) interacts with substrate. His483 provides a ligand contact to Zn(2+). Cys563, Cys566, and Cys571 together coordinate [4Fe-4S] cluster.

This sequence belongs to the ThiC family. As to quaternary structure, homodimer. It depends on [4Fe-4S] cluster as a cofactor.

The enzyme catalyses 5-amino-1-(5-phospho-beta-D-ribosyl)imidazole + S-adenosyl-L-methionine = 4-amino-2-methyl-5-(phosphooxymethyl)pyrimidine + CO + 5'-deoxyadenosine + formate + L-methionine + 3 H(+). Its pathway is cofactor biosynthesis; thiamine diphosphate biosynthesis. Catalyzes the synthesis of the hydroxymethylpyrimidine phosphate (HMP-P) moiety of thiamine from aminoimidazole ribotide (AIR) in a radical S-adenosyl-L-methionine (SAM)-dependent reaction. This chain is Phosphomethylpyrimidine synthase, found in Bradyrhizobium sp. (strain BTAi1 / ATCC BAA-1182).